The chain runs to 347 residues: Phenylalanine--tRNA ligase alpha subunit (347 aa).

Glu261 contributes to the Mg(2+) binding site.

This sequence belongs to the class-II aminoacyl-tRNA synthetase family. Phe-tRNA synthetase alpha subunit type 1 subfamily. In terms of assembly, tetramer of two alpha and two beta subunits. It depends on Mg(2+) as a cofactor.

The protein localises to the cytoplasm. It catalyses the reaction tRNA(Phe) + L-phenylalanine + ATP = L-phenylalanyl-tRNA(Phe) + AMP + diphosphate + H(+). This Streptococcus pyogenes serotype M18 (strain MGAS8232) protein is Phenylalanine--tRNA ligase alpha subunit.